A 294-amino-acid chain; its full sequence is Eukaryotic translation initiation factor 3 subunit F (294 aa).

Positions 20 to 163 constitute an MPN domain; sequence VTVTAQALFQ…IDPSKNSGNC (144 aa).

This sequence belongs to the eIF-3 subunit F family. As to quaternary structure, component of the eukaryotic translation initiation factor 3 (eIF-3) complex.

Its subcellular location is the cytoplasm. Its function is as follows. Component of the eukaryotic translation initiation factor 3 (eIF-3) complex, which is involved in protein synthesis of a specialized repertoire of mRNAs and, together with other initiation factors, stimulates binding of mRNA and methionyl-tRNAi to the 40S ribosome. The eIF-3 complex specifically targets and initiates translation of a subset of mRNAs involved in cell proliferation. In Yarrowia lipolytica (strain CLIB 122 / E 150) (Yeast), this protein is Eukaryotic translation initiation factor 3 subunit F.